We begin with the raw amino-acid sequence, 256 residues long: Transmembrane protein 187 (256 aa).

7 helical membrane passes run 8 to 28 (ALFH…TGIF), 51 to 71 (FLAM…GVYW), 94 to 112 (VFAG…RIGM), 119 to 139 (VLDQ…CLCL), 146 to 168 (WLFL…HPHG), 193 to 213 (NISS…FVVL), and 233 to 253 (FWSK…LTSL).

The protein resides in the membrane. The sequence is that of Transmembrane protein 187 (TMEM187) from Bos taurus (Bovine).